We begin with the raw amino-acid sequence, 197 residues long: dCTP deaminase, dUMP-forming (197 aa).

Residues 105–110 (RSSMGR), Asp123, 131–133 (TLE), Gln152, Tyr166, Lys174, and Gln178 each bind dCTP. The Proton donor/acceptor role is filled by Glu133.

The protein belongs to the dCTP deaminase family. Homotrimer.

The enzyme catalyses dCTP + 2 H2O = dUMP + NH4(+) + diphosphate. It participates in pyrimidine metabolism; dUMP biosynthesis; dUMP from dCTP: step 1/1. Its function is as follows. Bifunctional enzyme that catalyzes both the deamination of dCTP to dUTP and the hydrolysis of dUTP to dUMP without releasing the toxic dUTP intermediate. This is dCTP deaminase, dUMP-forming from Methanosphaera stadtmanae (strain ATCC 43021 / DSM 3091 / JCM 11832 / MCB-3).